The chain runs to 459 residues: ATP-dependent protease ATPase subunit HslU (459 aa).

ATP is bound by residues V18, 60–65, D272, E337, and R409; that span reads GVGKTE.

Belongs to the ClpX chaperone family. HslU subfamily. As to quaternary structure, a double ring-shaped homohexamer of HslV is capped on each side by a ring-shaped HslU homohexamer. The assembly of the HslU/HslV complex is dependent on binding of ATP.

It is found in the cytoplasm. Its function is as follows. ATPase subunit of a proteasome-like degradation complex; this subunit has chaperone activity. The binding of ATP and its subsequent hydrolysis by HslU are essential for unfolding of protein substrates subsequently hydrolyzed by HslV. HslU recognizes the N-terminal part of its protein substrates and unfolds these before they are guided to HslV for hydrolysis. In Thermoanaerobacter sp. (strain X514), this protein is ATP-dependent protease ATPase subunit HslU.